The primary structure comprises 491 residues: Protein nucleotidyltransferase YdiU (491 aa).

Gly94, Gly96, Arg97, Lys117, Asp129, Gly130, Arg180, and Arg187 together coordinate ATP. The Proton acceptor role is filled by Asp256. Residues Asn257 and Asp266 each contribute to the Mg(2+) site. Asp266 contacts ATP.

The protein belongs to the SELO family. It depends on Mg(2+) as a cofactor. Mn(2+) serves as cofactor.

The enzyme catalyses L-seryl-[protein] + ATP = 3-O-(5'-adenylyl)-L-seryl-[protein] + diphosphate. It carries out the reaction L-threonyl-[protein] + ATP = 3-O-(5'-adenylyl)-L-threonyl-[protein] + diphosphate. It catalyses the reaction L-tyrosyl-[protein] + ATP = O-(5'-adenylyl)-L-tyrosyl-[protein] + diphosphate. The catalysed reaction is L-histidyl-[protein] + UTP = N(tele)-(5'-uridylyl)-L-histidyl-[protein] + diphosphate. The enzyme catalyses L-seryl-[protein] + UTP = O-(5'-uridylyl)-L-seryl-[protein] + diphosphate. It carries out the reaction L-tyrosyl-[protein] + UTP = O-(5'-uridylyl)-L-tyrosyl-[protein] + diphosphate. Functionally, nucleotidyltransferase involved in the post-translational modification of proteins. It can catalyze the addition of adenosine monophosphate (AMP) or uridine monophosphate (UMP) to a protein, resulting in modifications known as AMPylation and UMPylation. The protein is Protein nucleotidyltransferase YdiU of Clostridium botulinum (strain ATCC 19397 / Type A).